Consider the following 381-residue polypeptide: ATP-dependent (S)-NAD(P)H-hydrate dehydratase (381 aa).

Residues 84–376 enclose the YjeF C-terminal domain; that stretch reads AEAVVRRITP…EFLGKSLEDI (293 aa). Residues Gly197 and 250 to 256 contribute to the (6S)-NADPHX site; that span reads NVYEYKR. Residues 290–294 and 309–318 contribute to the ATP site; these read KGKAD and GSPRRCGGQG. (6S)-NADPHX is bound at residue Asp319.

The protein belongs to the NnrD/CARKD family. The cofactor is Mg(2+).

The enzyme catalyses (6S)-NADHX + ATP = ADP + phosphate + NADH + H(+). It catalyses the reaction (6S)-NADPHX + ATP = ADP + phosphate + NADPH + H(+). Its function is as follows. Catalyzes the dehydration of the S-form of NAD(P)HX at the expense of ATP, which is converted to ADP. Together with NAD(P)HX epimerase, which catalyzes the epimerization of the S- and R-forms, the enzyme allows the repair of both epimers of NAD(P)HX, a damaged form of NAD(P)H that is a result of enzymatic or heat-dependent hydration. In Sorghum bicolor (Sorghum), this protein is ATP-dependent (S)-NAD(P)H-hydrate dehydratase.